A 933-amino-acid chain; its full sequence is Dual 3',5'-cyclic-AMP and -GMP phosphodiesterase 11A (933 aa).

The disordered stretch occupies residues 42-125 (HSQGQGALGP…ASQKELRKSF (84 aa)). Phosphoserine is present on residues Ser-162, Ser-163, and Ser-239. 2 consecutive GAF domains span residues 217-370 (DLTS…GIAI) and 402-558 (DLEK…GLGI). Ser-424 is a 3',5'-cyclic GMP binding site. In terms of domain architecture, PDEase spans 588-912 (SKAEVDKFKA…SKWEELHQKR (325 aa)). Residue His-664 is the Proton donor of the active site. The a divalent metal cation site is built by His-668, His-704, Asp-705, and Asp-816.

Belongs to the cyclic nucleotide phosphodiesterase family. The cofactor is a divalent metal cation. In terms of tissue distribution, isoform 1 is present in prostate, pituitary, heart and liver. It is however not present in testis nor in penis, suggesting that weak inhibition by Tadalafil (Cialis) is not relevant (at protein level). Isoform 2 may be expressed in testis. Isoform 4 is expressed in adrenal cortex.

The protein resides in the cytoplasm. It is found in the cytosol. It carries out the reaction 3',5'-cyclic GMP + H2O = GMP + H(+). It catalyses the reaction 3',5'-cyclic AMP + H2O = AMP + H(+). Inhibited by 3-isobutyl-1-methylxanthine (IBMX), zaprinast and dipyridamole. cGMP acts as an allosteric activator. Weakly inhibited by Sildenafil (Viagra) and Tadalafil (Cialis); however, the fact that the protein is probably absent from testis, suggests that it is not biologically relevant and is not related with erectile dysfunction. Plays a role in signal transduction by regulating the intracellular concentration of cyclic nucleotides cAMP and cGMP. Catalyzes the hydrolysis of both cAMP and cGMP to 5'-AMP and 5'-GMP, respectively. This Homo sapiens (Human) protein is Dual 3',5'-cyclic-AMP and -GMP phosphodiesterase 11A.